The sequence spans 385 residues: MGIKGLNAIISEHVPSAVRKSEIKNFFGRKVAIDASMSLYQFLIAVRQQDGVQLASESGETTSHLMGIFYRTLRMIDNGIKPCYVFDGKPPVLKSHELSKRSARRATTEEKLKEAVEEAEKLKHERRLVKVTPEHNEEAKKLLRLMGLPYVEAPCEAEAQCAELAKAGKVYAAASEDMDTLCYRTPFLLRHLTFSEAKKEPIHEINTEILLQGLELSIEQFIDLGIMLGCDYCDSIRGVGPVTALKLIKEHKTLENIVEYIESGQANNKWKVPENWPFKEARQLFLDPDVVKGSEVDLKWSEPQEQELVDFMCKEKGFNEERIRSGIKRLQKGLKTGVQGRLDGFFKVKPKNKEQLAAANAKAKSTKAGKQATKGKVGKPGRPRK.

The interval 1-105 (MGIKGLNAII…HELSKRSARR (105 aa)) is N-domain. Aspartate 34 lines the Mg(2+) pocket. 2 residues coordinate DNA: arginine 47 and arginine 71. Mg(2+) contacts are provided by aspartate 87, glutamate 156, glutamate 158, aspartate 177, and aspartate 179. Positions 120–251 (EKLKHERRLV…VTALKLIKEH (132 aa)) are I-domain. Position 156 (glutamate 156) interacts with DNA. DNA-binding residues include glycine 229 and aspartate 231. A Mg(2+)-binding site is contributed by aspartate 231. Residues 338–346 (VQGRLDGFF) are interaction with PCNA. A compositionally biased stretch (low complexity) spans 356–370 (LAAANAKAKSTKAGK). Residues 356 to 385 (LAAANAKAKSTKAGKQATKGKVGKPGRPRK) form a disordered region. A compositionally biased stretch (basic residues) spans 376–385 (KVGKPGRPRK).

The protein belongs to the XPG/RAD2 endonuclease family. FEN1 subfamily. Interacts with PCNA. Three molecules of FEN1 bind to one PCNA trimer with each molecule binding to one PCNA monomer. PCNA stimulates the nuclease activity without altering cleavage specificity. Mg(2+) is required as a cofactor. Phosphorylated. Phosphorylation upon DNA damage induces relocalization to the nuclear plasma.

It localises to the nucleus. It is found in the nucleolus. Its subcellular location is the nucleoplasm. The protein resides in the mitochondrion. Functionally, structure-specific nuclease with 5'-flap endonuclease and 5'-3' exonuclease activities involved in DNA replication and repair. During DNA replication, cleaves the 5'-overhanging flap structure that is generated by displacement synthesis when DNA polymerase encounters the 5'-end of a downstream Okazaki fragment. It enters the flap from the 5'-end and then tracks to cleave the flap base, leaving a nick for ligation. Also involved in the long patch base excision repair (LP-BER) pathway, by cleaving within the apurinic/apyrimidinic (AP) site-terminated flap. Acts as a genome stabilization factor that prevents flaps from equilibrating into structures that lead to duplications and deletions. Also possesses 5'-3' exonuclease activity on nicked or gapped double-stranded DNA, and exhibits RNase H activity. Also involved in replication and repair of rDNA and in repairing mitochondrial DNA. The polypeptide is Flap endonuclease 1 (Lachancea thermotolerans (strain ATCC 56472 / CBS 6340 / NRRL Y-8284) (Yeast)).